The primary structure comprises 415 residues: UDP-N-acetylglucosamine 1-carboxyvinyltransferase (415 aa).

A phosphoenolpyruvate-binding site is contributed by 22-23 (KN). Arg92 is a binding site for UDP-N-acetyl-alpha-D-glucosamine. Cys116 serves as the catalytic Proton donor. Residue Cys116 is modified to 2-(S-cysteinyl)pyruvic acid O-phosphothioketal. UDP-N-acetyl-alpha-D-glucosamine-binding positions include 121–125 (RPIDL), Asp304, and Val326.

The protein belongs to the EPSP synthase family. MurA subfamily.

The protein localises to the cytoplasm. It catalyses the reaction phosphoenolpyruvate + UDP-N-acetyl-alpha-D-glucosamine = UDP-N-acetyl-3-O-(1-carboxyvinyl)-alpha-D-glucosamine + phosphate. It functions in the pathway cell wall biogenesis; peptidoglycan biosynthesis. Cell wall formation. Adds enolpyruvyl to UDP-N-acetylglucosamine. The sequence is that of UDP-N-acetylglucosamine 1-carboxyvinyltransferase from Halothermothrix orenii (strain H 168 / OCM 544 / DSM 9562).